The sequence spans 2278 residues: Genome polyprotein (2278 aa).

Positions 454-609 (LESTANSIRS…EDWKKKNPGK (156 aa)) constitute an SF3 helicase domain. 481 to 488 (GPPGIGKT) lines the ATP pocket. The tract at residues 939–958 (EEAKGKTKHGRGAKHARRGG) is disordered. Over residues 944–956 (KTKHGRGAKHARR) the composition is skewed to basic residues. Tyr-966 is modified (O-(5'-phospho-RNA)-tyrosine). The region spanning 1056 to 1204 (APTPIVTFTS…TKLAQRVTKT (149 aa)) is the Peptidase C24 domain. Active-site for 3CLpro activity residues include His-1086, Glu-1107, and Cys-1171. One can recognise a RdRp catalytic domain in the interval 1443–1568 (GVLYCLDYSK…SVCPATASIF (126 aa)).

In terms of assembly, homodimer. Homomultimer. Post-translationally, specific enzymatic cleavages in vivo yield mature proteins. Pro-Pol is first autocatalytically cleaved, then processes the whole polyprotein. In terms of processing, VPg is uridylylated by the polymerase and is covalently attached to the 5'-end of the polyadenylated genomic and subgenomic RNAs. This uridylylated form acts as a nucleotide-peptide primer for the polymerase.

It localises to the virion. The protein resides in the host cytoplasm. It carries out the reaction a ribonucleoside 5'-triphosphate + H2O = a ribonucleoside 5'-diphosphate + phosphate + H(+). It catalyses the reaction RNA(n) + a ribonucleoside 5'-triphosphate = RNA(n+1) + diphosphate. The enzyme catalyses Endopeptidase with a preference for cleavage when the P1 position is occupied by Glu-|-Xaa and the P1' position is occupied by Gly-|-Yaa.. Together with NTPase and NS4, initiates the formation of the replication complex. Induces the proliferation of the host smooth ER membranes forming long tubular structures. These remodeled membranes probably form the viral factories that contain the replication complex. Its function is as follows. Displays NTPase activity, but no helicase activity. Induces the formation of convoluted membranes derived from the host ER. These remodeled membranes probably form the viral factories that contain the replication complex. Together with NS2 and NS4, initiates the formation of the replication complex. In terms of biological role, probable key protein responsible for the formation of membrane alterations by the virus. Induces the formation of convoluted membranes derived from the host ER. These remodeled membranes probably form the viral factories that contain the replication complex. Together with NS2 and NTPase, initiates the formation of the replication complex. Functionally, viral genome-linked protein is covalently linked to the 5'-end of the positive-strand, negative-strand genomic RNAs and subgenomic RNA. Acts as a genome-linked replication primer. May recruit ribosome to viral RNA thereby promoting viral proteins translation. Interacts with host translation initiation complex to allow the translation of viral proteins. Protease-polymerase p76 processes the polyprotein: Pro-Pol is first released by autocleavage, then all other proteins are cleaved. Cleaves host translation initiation factor eIF4G1, eIF4G2 and PABP1 thereby inducing a shutdown of host protein synthesis. This shutdown may not prevent viral mRNA from being translated since viral Vpg replaces the cap. It is also an RNA-directed RNA polymerase which replicates genomic and antigenomic viral RNA by recognizing specific signals. Also transcribes a subgenomic mRNA by initiating RNA synthesis internally on antigenomic RNA. This sgRNA codes for structural proteins. Catalyzes the covalent attachment VPg with viral RNAs. Its function is as follows. Capsid protein self assembles to form an icosahedral capsid with a T=3 symmetry, about 38 nm in diameter, and consisting of 180 capsid proteins. The capsid encapsulate the genomic RNA and VP2 proteins. Attaches virion to target cells, inducing endocytosis of the viral particle. Acidification of the endosome induces conformational change of capsid protein thereby injecting virus genomic RNA into host cytoplasm. The chain is Genome polyprotein from Homo sapiens (Human).